The following is a 113-amino-acid chain: UPF0122 protein LCA_0713 (113 aa).

This sequence belongs to the UPF0122 family.

Its function is as follows. Might take part in the signal recognition particle (SRP) pathway. This is inferred from the conservation of its genetic proximity to ftsY/ffh. May be a regulatory protein. This is UPF0122 protein LCA_0713 from Latilactobacillus sakei subsp. sakei (strain 23K) (Lactobacillus sakei subsp. sakei).